The following is a 478-amino-acid chain: MIKPRTPPGIMELLPREQIAFQRMLDVIRRNYERFGFLPVETPVFELSDVLLTKSGGETERQVYFVQSTGALANAAAAADEGAENGGLPELALRFDLTVPLARYVAEHEHDLSFPFRRYQMQRVYRGERAQRGRFREFYQCDIDVIGKDALSIRYDAEVLAVIHAVFAELGIGDFKVQLNNRKLLRGFFESLGVAEGELQLAVLREVDKIDKRGADYVRDTLVGEGFGIPAEQVARILAFVAVRSNGHADALAQLQALEGSVGASATLGEGIAELREVLELVKALGVPESAYCLNFSIARGLDYYTGTVYETTLTDHPQIGSICSGGRYDSLASHYTKSKLPGVGISIGLTRLFWQLREAGLIQGIAESSVQAMVALMDETRLDDALDIARRLRIGGINTEVQMEPKKIGKQFQYAARAGIRFVVLAGDDELARGVVAVKDLVREQQFDVARDELASTLQVELEQARAMLVAGSVQGD.

Belongs to the class-II aminoacyl-tRNA synthetase family. Homodimer.

The protein resides in the cytoplasm. It carries out the reaction tRNA(His) + L-histidine + ATP = L-histidyl-tRNA(His) + AMP + diphosphate + H(+). This chain is Histidine--tRNA ligase (hisS), found in Xanthomonas axonopodis pv. citri (strain 306).